The chain runs to 240 residues: Large ribosomal subunit protein uL3 (240 aa).

Disordered stretches follow at residues 139 to 164 (VSHR…KMPG) and 215 to 240 (DAPK…QEGV). Gln151 is subject to N5-methylglutamine. Positions 225 to 240 (ADGGEQAAPAAEQEGV) are enriched in low complexity.

This sequence belongs to the universal ribosomal protein uL3 family. As to quaternary structure, part of the 50S ribosomal subunit. Forms a cluster with proteins L14 and L19. Methylated by PrmB.

Functionally, one of the primary rRNA binding proteins, it binds directly near the 3'-end of the 23S rRNA, where it nucleates assembly of the 50S subunit. This chain is Large ribosomal subunit protein uL3, found in Rhodopseudomonas palustris (strain BisA53).